Here is a 625-residue protein sequence, read N- to C-terminus: Probable receptor-like protein kinase At1g11050 (625 aa).

The first 20 residues, 1-20 (MPNSILFLLLSFLYLTNCVA), serve as a signal peptide directing secretion. The Extracellular segment spans residues 21–227 (QSPSQTCPLD…PLNSKKKRHT (207 aa)). N-linked (GlcNAc...) asparagine glycans are attached at residues asparagine 40, asparagine 106, asparagine 121, and asparagine 177. Residues 228–248 (VALALGITGAIFGALVIAGLI) form a helical membrane-spanning segment. Over 249–625 (CLYFRFGKAV…LQIHSGDMLR (377 aa)) the chain is Cytoplasmic. A Protein kinase domain is found at 295–555 (FSQKNFIGRG…NPKGIMERFL (261 aa)). ATP is bound by residues 301-309 (IGRGGFGFV) and lysine 323. The active-site Proton acceptor is the aspartate 426.

Belongs to the protein kinase superfamily. Ser/Thr protein kinase family.

It localises to the membrane. It carries out the reaction L-seryl-[protein] + ATP = O-phospho-L-seryl-[protein] + ADP + H(+). It catalyses the reaction L-threonyl-[protein] + ATP = O-phospho-L-threonyl-[protein] + ADP + H(+). This is Probable receptor-like protein kinase At1g11050 from Arabidopsis thaliana (Mouse-ear cress).